The chain runs to 476 residues: MKVSLPAFEKARVLVVGDVMLDRYWVGPTGRISPEAPVPVVKINQVEDRPGGAANVALNIATLGGQVQLAGLVGQDDTAHALTLGVQTLGVEPQWLTIADKPTITKLRVLSRNQQLIRLDFEEAFDKADSVRLLKQSEALLDSVDVVVLSDYAKGAIDQPRDFIALARAKGVMVLVDPKGSDFGRYQGASLITPNMSEFEAVVGTVTSEADLLEKARGLLKQHHFDAILVTRSEKGMTLVTTNAPELHIPTVAREVYDVTGAGDTVISALATSLAAGADLPQACAIANTAAGVVVGKLGTSTVSRIELIEALALHHGESGFGVVSEDQLAYALEQAKLRGERVVMTNGCFDILHAGHVSYLKQAKALGDRLIVAVNDDASVKRLKGDGRPVNQVDRRMAVLAGLASVDWVVPFSEDTPQRIITRLLPNLLVKGGDYKLEDIAGGAEVIAAGGQVQVLGFEDGISTTAIIQNIMANQ.

The interval 1-319 (MKVSLPAFEK…EALALHHGES (319 aa)) is ribokinase. 195–198 (NMSE) contacts ATP. Asp264 is a catalytic residue. The tract at residues 345–476 (MTNGCFDILH…AIIQNIMANQ (132 aa)) is cytidylyltransferase.

The protein in the N-terminal section; belongs to the carbohydrate kinase PfkB family. It in the C-terminal section; belongs to the cytidylyltransferase family. As to quaternary structure, homodimer.

It catalyses the reaction D-glycero-beta-D-manno-heptose 7-phosphate + ATP = D-glycero-beta-D-manno-heptose 1,7-bisphosphate + ADP + H(+). The enzyme catalyses D-glycero-beta-D-manno-heptose 1-phosphate + ATP + H(+) = ADP-D-glycero-beta-D-manno-heptose + diphosphate. The protein operates within nucleotide-sugar biosynthesis; ADP-L-glycero-beta-D-manno-heptose biosynthesis; ADP-L-glycero-beta-D-manno-heptose from D-glycero-beta-D-manno-heptose 7-phosphate: step 1/4. Its pathway is nucleotide-sugar biosynthesis; ADP-L-glycero-beta-D-manno-heptose biosynthesis; ADP-L-glycero-beta-D-manno-heptose from D-glycero-beta-D-manno-heptose 7-phosphate: step 3/4. Catalyzes the phosphorylation of D-glycero-D-manno-heptose 7-phosphate at the C-1 position to selectively form D-glycero-beta-D-manno-heptose-1,7-bisphosphate. Its function is as follows. Catalyzes the ADP transfer from ATP to D-glycero-beta-D-manno-heptose 1-phosphate, yielding ADP-D-glycero-beta-D-manno-heptose. In Shewanella baltica (strain OS155 / ATCC BAA-1091), this protein is Bifunctional protein HldE.